Reading from the N-terminus, the 96-residue chain is Co-chaperonin GroES (96 aa).

It belongs to the GroES chaperonin family. Heptamer of 7 subunits arranged in a ring. Interacts with the chaperonin GroEL.

It localises to the cytoplasm. Together with the chaperonin GroEL, plays an essential role in assisting protein folding. The GroEL-GroES system forms a nano-cage that allows encapsulation of the non-native substrate proteins and provides a physical environment optimized to promote and accelerate protein folding. GroES binds to the apical surface of the GroEL ring, thereby capping the opening of the GroEL channel. In Vibrio campbellii (strain ATCC BAA-1116), this protein is Co-chaperonin GroES.